Here is a 136-residue protein sequence, read N- to C-terminus: Small ribosomal subunit protein bS6 (136 aa).

Basic and acidic residues predominate over residues 97–128 (EKEQSAMLSRPDRDDFPGKDEERPRPSRRQYE). Residues 97–136 (EKEQSAMLSRPDRDDFPGKDEERPRPSRRQYEDVVEGGVE) form a disordered region.

The protein belongs to the bacterial ribosomal protein bS6 family.

In terms of biological role, binds together with bS18 to 16S ribosomal RNA. This Bartonella bacilliformis (strain ATCC 35685 / KC583 / Herrer 020/F12,63) protein is Small ribosomal subunit protein bS6.